The primary structure comprises 31 residues: Cytochrome b6-f complex subunit 6 (31 aa).

Residues isoleucine 4–glycine 24 form a helical membrane-spanning segment.

It belongs to the PetL family. As to quaternary structure, the 4 large subunits of the cytochrome b6-f complex are cytochrome b6, subunit IV (17 kDa polypeptide, PetD), cytochrome f and the Rieske protein, while the 4 small subunits are PetG, PetL, PetM and PetN. The complex functions as a dimer.

The protein resides in the plastid. Its subcellular location is the chloroplast thylakoid membrane. Its function is as follows. Component of the cytochrome b6-f complex, which mediates electron transfer between photosystem II (PSII) and photosystem I (PSI), cyclic electron flow around PSI, and state transitions. PetL is important for photoautotrophic growth as well as for electron transfer efficiency and stability of the cytochrome b6-f complex. The polypeptide is Cytochrome b6-f complex subunit 6 (Lepidium virginicum (Virginia pepperweed)).